We begin with the raw amino-acid sequence, 402 residues long: 4-hydroxy-3-methylbut-2-enyl diphosphate reductase (402 aa).

Cysteine 66 serves as a coordination point for [4Fe-4S] cluster. Histidine 96 is a binding site for (2E)-4-hydroxy-3-methylbut-2-enyl diphosphate. Residue histidine 96 participates in dimethylallyl diphosphate binding. Histidine 96 is an isopentenyl diphosphate binding site. [4Fe-4S] cluster is bound at residue cysteine 157. (2E)-4-hydroxy-3-methylbut-2-enyl diphosphate is bound at residue histidine 185. A dimethylallyl diphosphate-binding site is contributed by histidine 185. Residue histidine 185 coordinates isopentenyl diphosphate. The Proton donor role is filled by glutamate 187. A (2E)-4-hydroxy-3-methylbut-2-enyl diphosphate-binding site is contributed by threonine 250. Cysteine 288 contacts [4Fe-4S] cluster. The (2E)-4-hydroxy-3-methylbut-2-enyl diphosphate site is built by serine 317, serine 318, asparagine 319, and serine 379. The dimethylallyl diphosphate site is built by serine 317, serine 318, asparagine 319, and serine 379. Residues serine 317, serine 318, asparagine 319, and serine 379 each coordinate isopentenyl diphosphate.

It belongs to the IspH family. It depends on [4Fe-4S] cluster as a cofactor.

It carries out the reaction isopentenyl diphosphate + 2 oxidized [2Fe-2S]-[ferredoxin] + H2O = (2E)-4-hydroxy-3-methylbut-2-enyl diphosphate + 2 reduced [2Fe-2S]-[ferredoxin] + 2 H(+). The catalysed reaction is dimethylallyl diphosphate + 2 oxidized [2Fe-2S]-[ferredoxin] + H2O = (2E)-4-hydroxy-3-methylbut-2-enyl diphosphate + 2 reduced [2Fe-2S]-[ferredoxin] + 2 H(+). It participates in isoprenoid biosynthesis; dimethylallyl diphosphate biosynthesis; dimethylallyl diphosphate from (2E)-4-hydroxy-3-methylbutenyl diphosphate: step 1/1. The protein operates within isoprenoid biosynthesis; isopentenyl diphosphate biosynthesis via DXP pathway; isopentenyl diphosphate from 1-deoxy-D-xylulose 5-phosphate: step 6/6. Its function is as follows. Catalyzes the conversion of 1-hydroxy-2-methyl-2-(E)-butenyl 4-diphosphate (HMBPP) into a mixture of isopentenyl diphosphate (IPP) and dimethylallyl diphosphate (DMAPP). Acts in the terminal step of the DOXP/MEP pathway for isoprenoid precursor biosynthesis. This is 4-hydroxy-3-methylbut-2-enyl diphosphate reductase from Gloeothece citriformis (strain PCC 7424) (Cyanothece sp. (strain PCC 7424)).